The primary structure comprises 147 residues: Glucosamine 6-phosphate N-acetyltransferase (147 aa).

Residues 7–147 form the N-acetyltransferase domain; it reads LELRVLEESD…AHERQMRLDL (141 aa). D-glucosamine 6-phosphate contacts are provided by residues threonine 28 and 86-88; that span reads EDV. Acetyl-CoA contacts are provided by residues 88–90 and 96–101; these read VVV and GAGLGK. D-glucosamine 6-phosphate-binding positions include 117-118 and aspartate 122; that span reads YK. 131-133 serves as a coordination point for acetyl-CoA; the sequence is YEK.

This sequence belongs to the acetyltransferase family. GNA1 subfamily. As to quaternary structure, homodimer. Contains poly-N-acetyllactosamines.

It is found in the glycosome. It catalyses the reaction D-glucosamine 6-phosphate + acetyl-CoA = N-acetyl-D-glucosamine 6-phosphate + CoA + H(+). Its pathway is nucleotide-sugar biosynthesis; UDP-N-acetyl-alpha-D-glucosamine biosynthesis; N-acetyl-alpha-D-glucosamine 1-phosphate from alpha-D-glucosamine 6-phosphate (route I): step 1/2. Involved in the biosynthesis of UDP-N-acetyl-alpha-D-glucosamine. Catalyzes the formation of N-acetyl-D-glucosamine 6-phosphate from acetyl-coenzyme A (acetyl-CoA) and D-glucosamine 6-phosphate. The polypeptide is Glucosamine 6-phosphate N-acetyltransferase (Trypanosoma brucei brucei).